Reading from the N-terminus, the 180-residue chain is Ribosome rescue factor SmrB (180 aa).

Residues 98–173 (LDLHGLTQLQ…GNAALLVLVA (76 aa)) form the Smr domain.

Belongs to the SmrB family. As to quaternary structure, associates with collided ribosomes, but not with correctly translating polysomes.

Acts as a ribosome collision sensor. Detects stalled/collided disomes (pairs of ribosomes where the leading ribosome is stalled and a second ribosome has collided with it) and endonucleolytically cleaves mRNA at the 5' boundary of the stalled ribosome. Stalled/collided disomes form a new interface (primarily via the 30S subunits) that binds SmrB. Cleaved mRNA becomes available for tmRNA ligation, leading to ribosomal subunit dissociation and rescue of stalled ribosomes. This Pectobacterium carotovorum subsp. carotovorum (strain PC1) protein is Ribosome rescue factor SmrB.